A 155-amino-acid chain; its full sequence is S-ribosylhomocysteine lyase (155 aa).

Fe cation-binding residues include histidine 58, histidine 62, and cysteine 125.

The protein belongs to the LuxS family. Homodimer. It depends on Fe cation as a cofactor.

It catalyses the reaction S-(5-deoxy-D-ribos-5-yl)-L-homocysteine = (S)-4,5-dihydroxypentane-2,3-dione + L-homocysteine. Functionally, involved in the synthesis of autoinducer 2 (AI-2) which is secreted by bacteria and is used to communicate both the cell density and the metabolic potential of the environment. The regulation of gene expression in response to changes in cell density is called quorum sensing. Catalyzes the transformation of S-ribosylhomocysteine (RHC) to homocysteine (HC) and 4,5-dihydroxy-2,3-pentadione (DPD). The polypeptide is S-ribosylhomocysteine lyase (Helicobacter pylori (strain HPAG1)).